A 183-amino-acid polypeptide reads, in one-letter code: Endoribonuclease YbeY (183 aa).

Zn(2+)-binding residues include His-140, His-144, and His-150.

This sequence belongs to the endoribonuclease YbeY family. Requires Zn(2+) as cofactor.

The protein localises to the cytoplasm. Functionally, single strand-specific metallo-endoribonuclease involved in late-stage 70S ribosome quality control and in maturation of the 3' terminus of the 16S rRNA. This is Endoribonuclease YbeY from Bradyrhizobium diazoefficiens (strain JCM 10833 / BCRC 13528 / IAM 13628 / NBRC 14792 / USDA 110).